Here is a 181-residue protein sequence, read N- to C-terminus: Acireductone dioxygenase (181 aa).

Fe(2+) contacts are provided by His97, His99, Glu103, and His141. Ni(2+)-binding residues include His97, His99, Glu103, and His141.

This sequence belongs to the acireductone dioxygenase (ARD) family. Monomer. Fe(2+) is required as a cofactor. Requires Ni(2+) as cofactor.

The catalysed reaction is 1,2-dihydroxy-5-(methylsulfanyl)pent-1-en-3-one + O2 = 3-(methylsulfanyl)propanoate + CO + formate + 2 H(+). It catalyses the reaction 1,2-dihydroxy-5-(methylsulfanyl)pent-1-en-3-one + O2 = 4-methylsulfanyl-2-oxobutanoate + formate + 2 H(+). It functions in the pathway amino-acid biosynthesis; L-methionine biosynthesis via salvage pathway; L-methionine from S-methyl-5-thio-alpha-D-ribose 1-phosphate: step 5/6. Its function is as follows. Catalyzes 2 different reactions between oxygen and the acireductone 1,2-dihydroxy-3-keto-5-methylthiopentene (DHK-MTPene) depending upon the metal bound in the active site. Fe-containing acireductone dioxygenase (Fe-ARD) produces formate and 2-keto-4-methylthiobutyrate (KMTB), the alpha-ketoacid precursor of methionine in the methionine recycle pathway. Ni-containing acireductone dioxygenase (Ni-ARD) produces methylthiopropionate, carbon monoxide and formate, and does not lie on the methionine recycle pathway. The chain is Acireductone dioxygenase from Pseudomonas paraeruginosa (strain DSM 24068 / PA7) (Pseudomonas aeruginosa (strain PA7)).